The primary structure comprises 476 residues: MAPAGLSLGATILCLLAWAGLAAGDRVYIHPFHLLVHSKSNCDQLEKPSVETPADPTLTPVPIQTKSSPVDEEALWEQLVRATEKLEAEDRLRASEVGLLLNFMGFHVYKTLSETWSVASGLVFSPVALFSTLTSFYTGALDPTASRLQAFLGVPGEGQGCTSRLDGRKVLSSLQTIQGLLVAPGGASSQARLLLSTVVGLFTAPGLHLKQPFVQGLSSFAPITLPRSLDLSTDPNLAAEKINRFMHSATGWNMGRPLAAASPDSTLLFNAYVHFQGKMKGFSLLPGLTEFWVDNTTSVPVPMLSGSGTFHYWSDNQNHLSMTRVPLSANGYLLLIQPHHTLDLRKVEALIFQHNFLTRMKNLSPRAIHLTVPQLTLKASYDLQDLLAQAKLPTLLGAEANLGKISDANLRVGKVLNSVLFELKADGEQAPESVPQPAGPEALEVTLNSPFLLAVLERSSGALHFLGRVSRPLSAE.

The signal sequence occupies residues 1 to 24 (MAPAGLSLGATILCLLAWAGLAAG). A disulfide bridge connects residues Cys-42 and Cys-161. Residues 45–64 (LEKPSVETPADPTLTPVPIQ) form a disordered region. Asn-295 is a glycosylation site (N-linked (GlcNAc...) asparagine).

It belongs to the serpin family. Post-translationally, in response to low blood pressure, the enzyme renin/REN cleaves angiotensinogen to produce angiotensin-1. Angiotensin-1 is a substrate of ACE (angiotensin converting enzyme) that removes a dipeptide to yield the physiologically active peptide angiotensin-2. Angiotensin-1 and angiotensin-2 can be further processed to generate angiotensin-3, angiotensin-4. Angiotensin 1-9 is cleaved from angiotensin-1 by ACE2 and can be further processed by ACE to produce angiotensin 1-7, angiotensin 1-5 and angiotensin 1-4. Angiotensin 1-7 has also been proposed to be cleaved from angiotensin-2 by ACE2 or from angiotensin-1 by MME (neprilysin). The disulfide bond is labile. Angiotensinogen is present in the circulation in a near 40:60 ratio with the oxidized disulfide-bonded form, which preferentially interacts with receptor-bound renin.

It localises to the secreted. In terms of biological role, essential component of the renin-angiotensin system (RAS), a potent regulator of blood pressure, body fluid and electrolyte homeostasis. Acts directly on vascular smooth muscle as a potent vasoconstrictor, affects cardiac contractility and heart rate through its action on the sympathetic nervous system, and alters renal sodium and water absorption through its ability to stimulate the zona glomerulosa cells of the adrenal cortex to synthesize and secrete aldosterone. Acts by binding to angiotensin receptors AGTR1 and AGTR2. Also binds the DEAR/FBXW7-AS1 receptor. Functionally, stimulates aldosterone release. Its function is as follows. Is a ligand for the G-protein coupled receptor MAS1. Has vasodilator and antidiuretic effects. Has an antithrombotic effect that involves MAS1-mediated release of nitric oxide from platelets. This chain is Angiotensinogen (AGT), found in Ovis aries (Sheep).